We begin with the raw amino-acid sequence, 313 residues long: tRNA dimethylallyltransferase (313 aa).

Residue 12 to 19 (GPTASGKS) coordinates ATP. 14 to 19 (TASGKS) is a substrate binding site. Interaction with substrate tRNA regions lie at residues 37-40 (DSMQ) and 161-165 (QRSIR).

It belongs to the IPP transferase family. As to quaternary structure, monomer. Requires Mg(2+) as cofactor.

The catalysed reaction is adenosine(37) in tRNA + dimethylallyl diphosphate = N(6)-dimethylallyladenosine(37) in tRNA + diphosphate. Functionally, catalyzes the transfer of a dimethylallyl group onto the adenine at position 37 in tRNAs that read codons beginning with uridine, leading to the formation of N6-(dimethylallyl)adenosine (i(6)A). The sequence is that of tRNA dimethylallyltransferase from Pelagibacter ubique (strain HTCC1062).